The chain runs to 469 residues: MQLQRLGAPLLKRLVGGCIRQSTAPIMPCVVVSGSGVFLTPVRTYMPLPNDQSDFSPYIEIDLPSESRIQSLHKSGLAAQEWVACEKVHGTNFGIYLINQGDHEVVRFAKRSGIMDPNENFFGYHILIDEFTAQIRILNDLLKQKYGLSRVGRLVLNGELFGAKYKHPLVPKSEKWCTLPNGKKFPIAGVQIQREPFPQYSPELHFFAFDIKYSVSGAEEDFVLLGYDEFVEFSSKVPNLLYARALVRGTLDECLAFDVENFMTPLPALLGLGNYPLEGNLAEGVVIRHVRRGDPAVEKHNVSTIIKLRCSSFMELKHPGKQKELKETFIDTVRSGALRRVRGNVTVISDSMLPQVEAAANDLLLNNVSDGRLSNVLSKIGREPLLSGEVSQVDVVLMLAKDALKDFLKEVDSLVLNTTLAFRKLLITNVYFESKRLVEQKWKELMQEEAAAQSEAIPPLSPAAPTKGE.

The transit peptide at 1 to 44 (MQLQRLGAPLLKRLVGGCIRQSTAPIMPCVVVSGSGVFLTPVRT) directs the protein to the mitochondrion. Residues 59-61 (IEI), 86-92 (EKVHGTN), R111, E159, F209, and 307-309 (KLR) contribute to the ATP site. K87 functions as the N6-AMP-lysine intermediate in the catalytic mechanism. The interval 450–469 (AAAQSEAIPPLSPAAPTKGE) is disordered.

Belongs to the RNA ligase 2 family. Component of the RNA editing complex (editosome), a 1600 kDa complex composed of at least 20 proteins. Interacts with terminal uridylyltransferase MEAT1.

The protein resides in the mitochondrion. The catalysed reaction is ATP + (ribonucleotide)n-3'-hydroxyl + 5'-phospho-(ribonucleotide)m = (ribonucleotide)n+m + AMP + diphosphate.. Essential for RNA editing. RNA editing in kinetoplastid mitochondria inserts and deletes uridylates at multiple sites in pre-mRNAs as directed by guide RNAs. The chain is RNA-editing ligase 1, mitochondrial (REL1) from Trypanosoma brucei brucei.